A 152-amino-acid chain; its full sequence is MKYMTVTDLNNAGATVIGTIKGGEWFLGTPHKDILSKPGFYFLVSKLDGRPFSNPCVSARFYVGNQRSKQGFSAVLSHIRQRRSQLARTIANNNVPYTVFYLPASKMKPLTTGFGKGQLALAFTRNHHSEYQTLEEMNRMLADNFKFVLQAY.

Functionally, disorganizes the host nucleoid and inhibits replication, but without host DNA cleavage or degradation. Only the architecture of the nucleoid is affected. May act on the host chromosomal sequences that determine the structure of the nucleoid. Binds to dsDNA but not to ssDNA. This is Nucleoid disruption protein (ndd) from Enterobacteria phage K3 (Bacteriophage K3).